Reading from the N-terminus, the 858-residue chain is Ubiquitin carboxyl-terminal hydrolase 5 (858 aa).

Ala2 carries the N-acetylalanine modification. The segment at 74–96 (RRTRRPKEEDPATGTGDPPRKKP) is disordered. A Glycyl lysine isopeptide (Lys-Gly) (interchain with G-Cter in SUMO) cross-link involves residue Lys113. Phosphoserine is present on residues Ser149 and Ser156. The UBP-type; degenerate zinc-finger motif lies at 175–283 (QVSKHAFSLK…EHLSHFGIDM (109 aa)). Cysteines 195 and 816 form a disulfide. Cys199 and Cys202 together coordinate Zn(2+). Trp209 is a binding site for substrate. Cys219 is a Zn(2+) binding site. Position 221-224 (221-224 (RRYF)) interacts with substrate. Residue His232 participates in Zn(2+) binding. Positions 259, 261, and 264 each coordinate substrate. A Phosphothreonine modification is found at Thr292. The USP domain occupies 326 to 856 (TGIRNLGNSC…LGYIYFYQRV (531 aa)). The active-site Nucleophile is the Cys335. Residue Thr623 is modified to Phosphothreonine. UBA domains lie at 654 to 695 (MLDE…VMSH) and 722 to 762 (PPPE…IFSH). Ser779, Ser783, and Ser785 each carry phosphoserine. His818 functions as the Proton acceptor in the catalytic mechanism.

The protein belongs to the peptidase C19 family. As to quaternary structure, homodimer. Interacts with TRIML1. Post-translationally, ubiquitinated by SMURF1; leading to proteasomal degradation. In terms of processing, SUMOylated at Lys-113; SUMOylation affects the interaction with Cav3.2 channels.

It localises to the cytoplasm. Its subcellular location is the stress granule. The protein resides in the nucleus. The catalysed reaction is Thiol-dependent hydrolysis of ester, thioester, amide, peptide and isopeptide bonds formed by the C-terminal Gly of ubiquitin (a 76-residue protein attached to proteins as an intracellular targeting signal).. Functionally, deubiquitinating enzyme that participates in a wide range of cellular processes by specifically cleaving isopeptide bonds between ubiquitin and substrate proteins or ubiquitin itself. Affects thereby important cellular signaling pathways such as NF-kappa-B, Wnt/beta-catenin, and cytokine production by regulating ubiquitin-dependent protein degradation. Participates in the activation of the Wnt signaling pathway by promoting FOXM1 deubiquitination and stabilization that induces the recruitment of beta-catenin to Wnt target gene promoter. Regulates the assembly and disassembly of heat-induced stress granules by mediating the hydrolysis of unanchored ubiquitin chains. Promotes lipopolysaccharide-induced apoptosis and inflammatory response by stabilizing the TXNIP protein. Affects T-cell biology by stabilizing the inhibitory receptor on T-cells PDC1. Acts as a negative regulator of autophagy by regulating ULK1 at both protein and mRNA levels. Acts also as a negative regulator of type I interferon production by simultaneously removing both 'Lys-48'-linked unanchored and 'Lys-63'-linked anchored polyubiquitin chains on the transcription factor IRF3. Modulates the stability of DNA mismatch repair protein MLH1 and counteracts the effect of the ubiquitin ligase UBR4. Upon activation by insulin, it gets phosphorylated through mTORC1-mediated phosphorylation to enhance YTHDF1 stability by removing 'Lys-11'-linked polyubiquitination. May also deubiquitinate other substrates such as the calcium channel CACNA1H. This is Ubiquitin carboxyl-terminal hydrolase 5 (USP5) from Homo sapiens (Human).